Here is a 134-residue protein sequence, read N- to C-terminus: Salivary protein 15 Iric-1 (134 aa).

A signal peptide spans Met1–Val21. The N-linked (GlcNAc...) asparagine glycan is linked to Asn22. Residues Pro48–Asn67 form a required for Borrelia OspC-binding region. 2 N-linked (GlcNAc...) asparagine glycosylation sites follow: Asn91 and Asn103. Positions Gly115 to Cys134 are CD4-binding.

The protein belongs to the salp15 family. In terms of assembly, monomer. Interacts with host CD4. Interacts with host DC-SIGN (CD209). (Microbial infection) Interacts with Borrelia outer surface protein C (OspC). Expressed in salivary glands. Detected in fed adult female.

The protein localises to the secreted. Its function is as follows. Salivary tick protein that downregulates host immune system by binding to both dendritic cells, and CD4(+) T cells. Specifically binds to the CD4 coreceptor on T cells. This interaction prevents the activation of the Src kinase, Lck, and its downstream substrate Zap-70, and results in deficient activation of PLCgamma1, the repression of calcium fluxes triggered by T-cell antigen receptor (TCR) ligation, and a subsequent reduction in interleukin-2 production. This salivary protein also binds to DC-SIGN (CD209) on dendritic cells (DC) and activates the Raf-1 kinase/MEK signaling pathway that results in down-regulating expression of pro-inflammatory cytokines. Furthermore, it inhibits T cell proliferation induced by DCs. In addition, it inhibits in vitro keratinocyte inflammation induced by Borrelia burgdorferi or by the major outer surface protein (OspC) of Borrelia. In addition, it downregulates chemokines and monocyte chemoattractant protein 1, as well as several antimicrobial peptides such as defensins, cathelicidin, psoriasin, and RNase 7. Apart from its immunomodulatory activities, it is also associated with protection of Borrelia spirochetes from antibody-mediated killing through its binding to OspC. In vivo, tests on different immune disease animal models show promising therapeutic results, e.g., in inhibiting HIV infection, experimental autoimmune encephalomyelitis, transplantation rejection, and asthma. Functionally, (Microbial infection) Protects Borrelia garinii (strain VSBP) from host complement-mediated killing by binding to the surface of spirochetes and preventing deposition of host C5b-9 membrane attack complexes. Protects Borrelia garinii (strain A87S) from host complement-mediated killing. In terms of biological role, (Microbial infection) Partially protects Borrelia burgdorferi (strains VS215 and B31) from host complement-mediated killing. The polypeptide is Salivary protein 15 Iric-1 (Ixodes ricinus (Common tick)).